Reading from the N-terminus, the 264-residue chain is Thymidylate synthase (264 aa).

Arg21 is a dUMP binding site. His51 lines the (6R)-5,10-methylene-5,6,7,8-tetrahydrofolate pocket. DUMP is bound at residue 126 to 127 (RR). Residue Cys146 is the Nucleophile of the active site. Residues 166-169 (RSCD), Asn177, and 207-209 (HLY) contribute to the dUMP site. Asp169 lines the (6R)-5,10-methylene-5,6,7,8-tetrahydrofolate pocket. Ser263 serves as a coordination point for (6R)-5,10-methylene-5,6,7,8-tetrahydrofolate.

It belongs to the thymidylate synthase family. Bacterial-type ThyA subfamily. In terms of assembly, homodimer.

It is found in the cytoplasm. It carries out the reaction dUMP + (6R)-5,10-methylene-5,6,7,8-tetrahydrofolate = 7,8-dihydrofolate + dTMP. Its pathway is pyrimidine metabolism; dTTP biosynthesis. Catalyzes the reductive methylation of 2'-deoxyuridine-5'-monophosphate (dUMP) to 2'-deoxythymidine-5'-monophosphate (dTMP) while utilizing 5,10-methylenetetrahydrofolate (mTHF) as the methyl donor and reductant in the reaction, yielding dihydrofolate (DHF) as a by-product. This enzymatic reaction provides an intracellular de novo source of dTMP, an essential precursor for DNA biosynthesis. In Buchnera aphidicola subsp. Acyrthosiphon pisum (strain Tuc7), this protein is Thymidylate synthase.